Here is a 127-residue protein sequence, read N- to C-terminus: Small ribosomal subunit protein uS11 (127 aa).

Belongs to the universal ribosomal protein uS11 family. As to quaternary structure, part of the 30S ribosomal subunit. Interacts with proteins S7 and S18. Binds to IF-3.

Located on the platform of the 30S subunit, it bridges several disparate RNA helices of the 16S rRNA. Forms part of the Shine-Dalgarno cleft in the 70S ribosome. The polypeptide is Small ribosomal subunit protein uS11 (Streptococcus pyogenes serotype M1).